The sequence spans 331 residues: D-alanine--D-alanine ligase (331 aa).

The region spanning 116–316 (KRLWQTHSLP…YEDFVLQLAA (201 aa)) is the ATP-grasp domain. 142–197 (ADRLGLPLIVKPAREGSSIGLTKVTSVAELPAAYEKAARLDRDVMAEQFIDGDELT) is a binding site for ATP. Mg(2+) is bound by residues D269, E283, and N285.

This sequence belongs to the D-alanine--D-alanine ligase family. It depends on Mg(2+) as a cofactor. Requires Mn(2+) as cofactor.

It localises to the cytoplasm. The enzyme catalyses 2 D-alanine + ATP = D-alanyl-D-alanine + ADP + phosphate + H(+). It participates in cell wall biogenesis; peptidoglycan biosynthesis. In terms of biological role, cell wall formation. The sequence is that of D-alanine--D-alanine ligase from Ralstonia nicotianae (strain ATCC BAA-1114 / GMI1000) (Ralstonia solanacearum).